The primary structure comprises 291 residues: 2-C-methyl-D-erythritol 4-phosphate cytidylyltransferase (291 aa).

The disordered stretch occupies residues 1 to 23 (MTERDFDTPVETPTVQPAPAQGA).

The protein belongs to the IspD/TarI cytidylyltransferase family. IspD subfamily.

The catalysed reaction is 2-C-methyl-D-erythritol 4-phosphate + CTP + H(+) = 4-CDP-2-C-methyl-D-erythritol + diphosphate. Its pathway is isoprenoid biosynthesis; isopentenyl diphosphate biosynthesis via DXP pathway; isopentenyl diphosphate from 1-deoxy-D-xylulose 5-phosphate: step 2/6. Functionally, catalyzes the formation of 4-diphosphocytidyl-2-C-methyl-D-erythritol from CTP and 2-C-methyl-D-erythritol 4-phosphate (MEP). The sequence is that of 2-C-methyl-D-erythritol 4-phosphate cytidylyltransferase from Bifidobacterium longum (strain NCC 2705).